A 497-amino-acid chain; its full sequence is Putative diacyglycerol O-acyltransferase MT3584 (497 aa).

His143 serves as the catalytic Proton acceptor.

Belongs to the long-chain O-acyltransferase family.

It catalyses the reaction an acyl-CoA + a 1,2-diacyl-sn-glycerol = a triacyl-sn-glycerol + CoA. The protein operates within glycerolipid metabolism; triacylglycerol biosynthesis. This chain is Putative diacyglycerol O-acyltransferase MT3584, found in Mycobacterium tuberculosis (strain CDC 1551 / Oshkosh).